Reading from the N-terminus, the 762-residue chain is MRLWKAVVVTLAFVSMDVGVTTAIYAFSHLDRSLLEDIRHFNIFDSVLDLWAACLYRSCLLLGATIGVAKNSALGPRRLRASWLVITLVCLFVGIYAMAKLLLFSEVRRPIRDPWFWALFVWTYISLAASFLLWGLLATVRPDAEALEPGNEGFHGEGGAPAEQASGATLQKLLSYTKPDVAFLVAASFFLIVAALGETFLPYYTGRAIDSIVIQKSMDQFTTAVVVVCLLAIGSSLAAGIRGGIFTLVFARLNIRLRNCLFRSLVSQETSFFDENRTGDLISRLTSDTTMVSDLVSQNINIFLRNTVKVTGVVVFMFSLSWQLSLVTFMGFPIIMMVSNIYGKYYKRLSKEVQSALARASTTAEETISAMKTVRSFANEEEEAEVFLRKLQQVYKLNRKEAAAYMSYVWGSGLTLLVVQVSILYYGGHLVISGQMSSGNLIAFIIYEFVLGDCMESVGSVYSGLMQGVGAAEKVFEFIDRQPTMVHDGRLAPDHLEGRVDFENVTFTYRTRPHTQVLQNVSFSLSPGKVTALVGPSGSGKSSCVNILENFYPLQGGRVLLDGEPIGAYDHKYLHRVISLVSQEPVLFARSITDNISYGLPTVPFEMVVEAAQKANAHGFIMELQDGYSTETGEKGAQLSGGQKQRVAMARALVRNPPVLILDEATSALDAESEYLIQQAIHGNLQRHTVLIIAHRLSTVERAHLIVVLDKGRVVQQGTHQQLLAQGGLYAKLVQRQMLGLEHPLDYTAGHKEPPSNTEHKA.

The next 8 helical transmembrane spans lie at Val7–Phe27, Val47–Gly67, Leu84–Phe104, Phe116–Leu136, Val181–Leu201, Phe221–Ile241, Val315–Ile335, and Ser412–Ile432. The ABC transmembrane type-1 domain occupies Leu184–Gln467. An ABC transporter domain is found at Val500–Arg736. Gly535 to Ser542 lines the ATP pocket.

The protein belongs to the ABC transporter superfamily. ABCB family. MHC peptide exporter (TC 3.A.1.209) subfamily. Homodimer. Interacts (via TMD0 region) with LAMP1; this interaction strongly stabilizes ABCB9 and protects ABCB9 against lysosomal degradation. Interacts (via TMD0 region) with LAMP2 (isoform LAMP-2B). Interacts (via TMD0) with YIF1B; this interaction allows (but is not essential) the ER-to-Golgi trafficking and strongly depends on a salt bridge within TMD0. In terms of tissue distribution, found in testis, particularly in the Sertoli cells of the seminiferous tubules. Also expressed in kidney, brain, heart, lung, spleen, thymus, intestine and testis. Higher expression detected in brain and testis than in thymus and intestine.

It is found in the lysosome membrane. The enzyme catalyses a [oligopeptide](in) + ATP + H2O = a [oligopeptide](out) + ADP + phosphate + H(+). In terms of biological role, ATP-dependent low-affinity peptide transporter which translocates a broad spectrum of peptides from the cytosol to the lysosomal lumen for degradation. Displays a broad peptide length specificity from 6-mer up to at least 59-mer peptides with an optimum of 23-mers. Binds and transports smaller and larger peptides with the same affinity. Favors positively charged, aromatic or hydrophobic residues in the N- and C-terminal positions whereas negatively charged residues as well as asparagine and methionine are not favored. This chain is ABC-type oligopeptide transporter ABCB9, found in Rattus norvegicus (Rat).